The following is a 172-amino-acid chain: Small ribosomal subunit protein uS4 (172 aa).

One can recognise an S4 RNA-binding domain in the interval 104-168 (RRLQTIVYRK…SPLAKMAQGG (65 aa)).

This sequence belongs to the universal ribosomal protein uS4 family. In terms of assembly, part of the 30S ribosomal subunit. Contacts protein S5. The interaction surface between S4 and S5 is involved in control of translational fidelity.

One of the primary rRNA binding proteins, it binds directly to 16S rRNA where it nucleates assembly of the body of the 30S subunit. In terms of biological role, with S5 and S12 plays an important role in translational accuracy. This chain is Small ribosomal subunit protein uS4, found in Thermofilum pendens (strain DSM 2475 / Hrk 5).